The chain runs to 218 residues: Leucine-rich repeat protein 1 (218 aa).

The N-terminal stretch at 1–27 (MASRNYRWELFAASLTLTLALIHLVEA) is a signal peptide. LRR repeat units follow at residues 94 to 117 (EHLQ…LGNL), 119 to 140 (NLIS…SLGK), 141 to 165 (LKSL…LTAI), and 167 to 190 (SLKV…PFAH).

As to quaternary structure, interacts with HIR1.

Involved in plant defense response. This chain is Leucine-rich repeat protein 1, found in Arabidopsis thaliana (Mouse-ear cress).